The sequence spans 408 residues: Inhibin beta B chain (408 aa).

The N-terminal stretch at 1–28 (MDGLPGRALGAACLLMLAVGSLGPGVWG) is a signal peptide. The segment at 29 to 60 (SPTPPPLPAAPQPPPPPPGAPGGSQDTCTSCG) is disordered. Positions 29–293 (SPTPPPLPAA…GDSRHRIRKR (265 aa)) are excised as a propeptide. Pro residues predominate over residues 30–48 (PTPPPLPAAPQPPPPPPGA). Asparagine 94 carries N-linked (GlcNAc...) asparagine glycosylation. Disulfide bonds link cysteine 297–cysteine 305, cysteine 304–cysteine 373, cysteine 333–cysteine 405, and cysteine 337–cysteine 407.

The protein belongs to the TGF-beta family. Dimeric, linked by one or more disulfide bonds. Inhibin B is a dimer of alpha and beta-B. Activin B is a homodimer of beta-B. Activin AB is a dimer of beta-A and beta-B. Interacts with FST and FSTL3.

Its subcellular location is the secreted. In terms of biological role, inhibins and activins inhibit and activate, respectively, the secretion of follitropin by the pituitary gland. Inhibins/activins are involved in regulating a number of diverse functions such as hypothalamic and pituitary hormone secretion, gonadal hormone secretion, germ cell development and maturation, erythroid differentiation, insulin secretion, nerve cell survival, embryonic axial development or bone growth, depending on their subunit composition. Inhibins appear to oppose the functions of activins. Activin B is a dimer of alpha and beta-B that plays a role in several essential biological processes including embryonic development, stem cell maintenance and differentiation, haematopoiesis, cell proliferation and wound healing. Signals through type I receptor ACVR1C, abundantly expressed in pancreatic beta cells, and type II receptors like ACVR2A. Upon ligand binding, these receptors phosphorylate intracellular signaling mediators SMAD2 and SMAD3, which form a complex with SMAD4, translocate to the nucleus, and regulate gene expression. Plays a crucial role in the induction of hepcidin by inflammation through activation of ACVR1C and subsequent phosphorylation of SMAD1/5/8. Regulates adipocyte lipid metabolism by decreasing non-esterified fatty acids and glycerol release and increases intracellular triglyceride content. Stimulates wound healing by promoting cell migration and hair follicle regeneration through the JNK and ERK signaling pathways downstream of RHOA. Functionally, inhibin B is a dimer of alpha and beta-B that plays a crucial role in the regulation of the reproductive system by inhibiting the secretion of follicle-stimulating hormone (FSH) from the anterior pituitary gland. Thereby, maintains reproductive homeostasis in both males and females. Acts as a more potent suppressor of FSH release than inhibin A. Functions as competitive receptor antagonist binding activin type II receptors with high affinity in the presence of the TGF-beta type III coreceptor/TGFBR3L. This is Inhibin beta B chain (INHBB) from Bos taurus (Bovine).